Here is a 487-residue protein sequence, read N- to C-terminus: Betaine aldehyde dehydrogenase (487 aa).

Residues Ser26, Ile27, and Asp93 each coordinate K(+). 150–152 (GAW) provides a ligand contact to NAD(+). Catalysis depends on Lys162, which acts as the Charge relay system. NAD(+)-binding positions include 176-179 (KPSE) and 229-232 (SVPT). Leu244 serves as a coordination point for K(+). Catalysis depends on Glu250, which acts as the Proton acceptor. Residues Gly252, Cys284, and Glu384 each contribute to the NAD(+) site. Cys284 acts as the Nucleophile in catalysis. Cys284 is modified (cysteine sulfenic acid (-SOH)). Positions 454 and 457 each coordinate K(+). Residue Glu461 is the Charge relay system of the active site.

The protein belongs to the aldehyde dehydrogenase family. Dimer of dimers. K(+) serves as cofactor.

It catalyses the reaction betaine aldehyde + NAD(+) + H2O = glycine betaine + NADH + 2 H(+). It participates in amine and polyamine biosynthesis; betaine biosynthesis via choline pathway; betaine from betaine aldehyde: step 1/1. Its function is as follows. Involved in the biosynthesis of the osmoprotectant glycine betaine. Catalyzes the irreversible oxidation of betaine aldehyde to the corresponding acid. This Sinorhizobium fredii (strain NBRC 101917 / NGR234) protein is Betaine aldehyde dehydrogenase.